Here is a 331-residue protein sequence, read N- to C-terminus: CMRF35-like molecule 9 (331 aa).

The N-terminal stretch at 1–18 (MRPLVLLWGCLVLPGYEA) is a signal peptide. Positions 19–120 (LKGPKEISGF…LGRDESFEVT (102 aa)) constitute an Ig-like V-type domain. Residues 19 to 204 (LKGPKEISGF…KPSVSIPMVR (186 aa)) lie on the Extracellular side of the membrane. The cysteines at positions 37 and 106 are disulfide-linked. Threonine 136 carries O-linked (GalNAc...) threonine glycosylation. O-linked (GalNAc...) serine glycosylation is present at serine 140. Residue threonine 143 is glycosylated (O-linked (GalNAc...) threonine). A glycan (O-linked (GalNAc...) serine) is linked at serine 145. O-linked (GalNAc...) threonine glycosylation is found at threonine 150 and threonine 152. Serine 154 is a glycosylation site (O-linked (GalNAc...) serine). O-linked (GalNAc...) threonine glycosylation is found at threonine 164, threonine 181, and threonine 182. A glycan (O-linked (GalNAc...) serine) is linked at serine 186. Residues 205 to 225 (MMAPVLILLSLLLAAGLIAFG) form a helical membrane-spanning segment. The Cytoplasmic segment spans residues 226–331 (SHMLRWRKKA…ELAFSEFISV (106 aa)). Over residues 278–293 (NPSAVPSPETQNLSQS) the composition is skewed to polar residues. Residues 278-318 (NPSAVPSPETQNLSQSTEEEEAARSLDDDKEDVMAPPPLQM) are disordered.

It belongs to the CD300 family. In terms of processing, O-glycosylated with sialylated oligosaccharides. As to expression, expressed in monocyte cell lines. Expressed in certain types of endothelial and myeloid lineage cells. Expressed in mesenteric lymph nodes (LNs), spleen, thymus, lung, heart and kidney. Expressed in high endothelial venules (HEVs) in peripheral and mesenteric LNs (at protein level). Highly expressed in heart. Slightly expressed in spleen and thymus. Isoform 5 is expressed preferentially in heart. Isoform 1 is expressed predominantly in kidney and liver.

The protein resides in the apical cell membrane. Its subcellular location is the basolateral cell membrane. It is found in the endosome. The protein localises to the multivesicular body membrane. Functionally, receptor which may mediate L-selectin-dependent lymphocyte rollings. Binds SELL in a calcium dependent manner. Binds lymphocyte. The chain is CMRF35-like molecule 9 (Cd300lg) from Mus musculus (Mouse).